The following is a 139-amino-acid chain: MPLTSLVGQFEGVVYTQPEKLVERHGWLEAWKCKAWMEDDPSQVVTLLLAYRSPLCRDTKPMYRPVAEEILKADQVDVLARGFRHDDNMMHGRGEFLVARLRPHSFVESPMCPSLDEIREVVGSTVETALTGNGEMAAP.

This Mycobacterium (Mycobacteriophage D29) protein is Gene 70 protein (70).